The chain runs to 88 residues: Small ribosomal subunit protein uS17c (88 aa).

It belongs to the universal ribosomal protein uS17 family. In terms of assembly, part of the 30S ribosomal subunit.

It localises to the plastid. Its subcellular location is the cyanelle. Its function is as follows. One of the primary rRNA binding proteins, it binds specifically to the 5'-end of 16S ribosomal RNA. This is Small ribosomal subunit protein uS17c (rps17) from Cyanophora paradoxa.